A 137-amino-acid chain; its full sequence is Nucleoside diphosphate kinase (137 aa).

ATP is bound by residues lysine 9, phenylalanine 57, arginine 85, threonine 91, arginine 102, and asparagine 112. Histidine 115 acts as the Pros-phosphohistidine intermediate in catalysis.

Belongs to the NDK family. In terms of assembly, homotetramer. It depends on Mg(2+) as a cofactor.

It is found in the cytoplasm. It catalyses the reaction a 2'-deoxyribonucleoside 5'-diphosphate + ATP = a 2'-deoxyribonucleoside 5'-triphosphate + ADP. The catalysed reaction is a ribonucleoside 5'-diphosphate + ATP = a ribonucleoside 5'-triphosphate + ADP. Major role in the synthesis of nucleoside triphosphates other than ATP. The ATP gamma phosphate is transferred to the NDP beta phosphate via a ping-pong mechanism, using a phosphorylated active-site intermediate. This is Nucleoside diphosphate kinase from Campylobacter lari (strain RM2100 / D67 / ATCC BAA-1060).